The sequence spans 1102 residues: Carbamoyl phosphate synthase large chain (1102 aa).

A carboxyphosphate synthetic domain region spans residues 1-408 (MPKRTDIQSV…ALQKALRSLE (408 aa)). ATP contacts are provided by Arg129, Arg175, Gly181, Gly182, Glu214, Ile216, Glu221, Gly247, Val248, His249, Gln291, and Glu305. In terms of domain architecture, ATP-grasp 1 spans 138–334 (AVRAKIGHGE…IAKIAAKLAV (197 aa)). Mg(2+)-binding residues include Gln291, Glu305, and Asn307. The Mn(2+) site is built by Gln291, Glu305, and Asn307. The oligomerization domain stretch occupies residues 409–551 (KKGSQFTFVG…YFYSSYDEES (143 aa)). Positions 552–954 (EVAPREKPAV…AYAKSQAGAY (403 aa)) are carbamoyl phosphate synthetic domain. Residues 682–873 (GQVLAEAGLP…LAKAAARISL (192 aa)) enclose the ATP-grasp 2 domain. Residues Arg718, Arg757, Leu759, Glu764, Gly789, Ile790, His791, Ser792, Gln832, and Glu844 each contribute to the ATP site. Mg(2+)-binding residues include Gln832, Glu844, and Asn846. Positions 832, 844, and 846 each coordinate Mn(2+). One can recognise an MGS-like domain in the interval 955–1100 (GPLPTKGRAF…QEHAEHLTAA (146 aa)). An allosteric domain region spans residues 955-1102 (GPLPTKGRAF…HAEHLTAARD (148 aa)).

The protein belongs to the CarB family. As to quaternary structure, composed of two chains; the small (or glutamine) chain promotes the hydrolysis of glutamine to ammonia, which is used by the large (or ammonia) chain to synthesize carbamoyl phosphate. Tetramer of heterodimers (alpha,beta)4. It depends on Mg(2+) as a cofactor. Mn(2+) serves as cofactor.

It carries out the reaction hydrogencarbonate + L-glutamine + 2 ATP + H2O = carbamoyl phosphate + L-glutamate + 2 ADP + phosphate + 2 H(+). The enzyme catalyses hydrogencarbonate + NH4(+) + 2 ATP = carbamoyl phosphate + 2 ADP + phosphate + 2 H(+). It participates in amino-acid biosynthesis; L-arginine biosynthesis; carbamoyl phosphate from bicarbonate: step 1/1. Its pathway is pyrimidine metabolism; UMP biosynthesis via de novo pathway; (S)-dihydroorotate from bicarbonate: step 1/3. In terms of biological role, large subunit of the glutamine-dependent carbamoyl phosphate synthetase (CPSase). CPSase catalyzes the formation of carbamoyl phosphate from the ammonia moiety of glutamine, carbonate, and phosphate donated by ATP, constituting the first step of 2 biosynthetic pathways, one leading to arginine and/or urea and the other to pyrimidine nucleotides. The large subunit (synthetase) binds the substrates ammonia (free or transferred from glutamine from the small subunit), hydrogencarbonate and ATP and carries out an ATP-coupled ligase reaction, activating hydrogencarbonate by forming carboxy phosphate which reacts with ammonia to form carbamoyl phosphate. This Streptomyces avermitilis (strain ATCC 31267 / DSM 46492 / JCM 5070 / NBRC 14893 / NCIMB 12804 / NRRL 8165 / MA-4680) protein is Carbamoyl phosphate synthase large chain.